The primary structure comprises 318 residues: Pantothenate kinase (318 aa).

Position 96-103 (glycine 96–serine 103) interacts with ATP.

It belongs to the prokaryotic pantothenate kinase family.

It localises to the cytoplasm. The catalysed reaction is (R)-pantothenate + ATP = (R)-4'-phosphopantothenate + ADP + H(+). It participates in cofactor biosynthesis; coenzyme A biosynthesis; CoA from (R)-pantothenate: step 1/5. This chain is Pantothenate kinase, found in Rhodopseudomonas palustris (strain HaA2).